Reading from the N-terminus, the 331-residue chain is Phosphate acyltransferase (331 aa).

This sequence belongs to the PlsX family. Homodimer. Probably interacts with PlsY.

Its subcellular location is the cytoplasm. It catalyses the reaction a fatty acyl-[ACP] + phosphate = an acyl phosphate + holo-[ACP]. Its pathway is lipid metabolism; phospholipid metabolism. Catalyzes the reversible formation of acyl-phosphate (acyl-PO(4)) from acyl-[acyl-carrier-protein] (acyl-ACP). This enzyme utilizes acyl-ACP as fatty acyl donor, but not acyl-CoA. The chain is Phosphate acyltransferase from Wolinella succinogenes (strain ATCC 29543 / DSM 1740 / CCUG 13145 / JCM 31913 / LMG 7466 / NCTC 11488 / FDC 602W) (Vibrio succinogenes).